The following is a 400-amino-acid chain: MRFRSFFFSSSIFSLSHSRSPSLSSSRFSSLSAAMSPALEKSRQGNGGCNDDSKSKVTVVGSGNWGSVAAKLIASNALKLPSFHDEVRMWVFEEVLPNGEKLNDVINKTNENVKYLPGIKLGRNVVADPDLENAVKDANMLVFVTPHQFMDGICKKLDGKITGDVEAISLVKGMEVKKEGPCMISSLISKQLGINCCVLMGANIANEIAVEKFSEATVGYRGSREIADTWVQLFSTPYFMVTPVHDVEGVELCGTLKNVVAIAAGFVDGLEMGNNTKAAIMRIGLREMKALSKLLFPSVKDSTFFESCGVADVITTCLGGRNRRVAEAFAKSRGKRSFDELEAEMLQGQKLQGVSTAREVYEVLKHCGWLEMFPLFSTVHQICTGRLQPEAIVQYRENKL.

The transit peptide at 1-32 (MRFRSFFFSSSIFSLSHSRSPSLSSSRFSSLS) directs the protein to the chloroplast. NAD(+)-binding positions include 61–66 (GSGNWG), F92, F149, K172, and A205. K172 is a substrate binding site. The active-site Proton acceptor is K257. NAD(+) contacts are provided by R321, K350, and Q352. Position 321–322 (321–322 (RN)) interacts with substrate.

Belongs to the NAD-dependent glycerol-3-phosphate dehydrogenase family. Expressed in young seedlings, flowers and siliques. Expressed at low levels in roots.

It localises to the plastid. Its subcellular location is the chloroplast. The enzyme catalyses sn-glycerol 3-phosphate + NAD(+) = dihydroxyacetone phosphate + NADH + H(+). It participates in membrane lipid metabolism; glycerophospholipid metabolism. In terms of biological role, involved in glycerolipid metabolism. The protein is Glycerol-3-phosphate dehydrogenase [NAD(+)] 1, chloroplastic (DHAPRD) of Arabidopsis thaliana (Mouse-ear cress).